Consider the following 222-residue polypeptide: Small ribosomal subunit protein uS3 (222 aa).

The KH type-2 domain maps to 39–107; the sequence is VREFLHKKLA…PVQINIEEVR (69 aa).

It belongs to the universal ribosomal protein uS3 family. Part of the 30S ribosomal subunit. Forms a tight complex with proteins S10 and S14.

Functionally, binds the lower part of the 30S subunit head. Binds mRNA in the 70S ribosome, positioning it for translation. The protein is Small ribosomal subunit protein uS3 of Francisella tularensis subsp. tularensis (strain FSC 198).